We begin with the raw amino-acid sequence, 223 residues long: uncharacterized protein (223 aa).

This is an uncharacterized protein from Mycoplasma pneumoniae (strain ATCC 29342 / M129 / Subtype 1) (Mycoplasmoides pneumoniae).